Consider the following 235-residue polypeptide: AA9 family lytic polysaccharide monooxygenase D (235 aa).

Positions M1–G18 are cleaved as a signal peptide. H19 is a binding site for Cu(2+). The O-linked (Man...) serine glycan is linked to S29. C61 and C181 form a disulfide bridge. Residue H94 participates in Cu(2+) binding. H167 and Q176 together coordinate O2. Residue Y178 participates in Cu(2+) binding. The N-linked (GlcNAc...) asparagine glycan is linked to N221.

The protein belongs to the polysaccharide monooxygenase AA9 family. It depends on Cu(2+) as a cofactor.

Its subcellular location is the secreted. The catalysed reaction is [(1-&gt;4)-beta-D-glucosyl]n+m + reduced acceptor + O2 = 4-dehydro-beta-D-glucosyl-[(1-&gt;4)-beta-D-glucosyl]n-1 + [(1-&gt;4)-beta-D-glucosyl]m + acceptor + H2O.. Functionally, lytic polysaccharide monooxygenase (LPMO) that depolymerizes crystalline and amorphous polysaccharides via the oxidation of scissile alpha- or beta-(1-4)-glycosidic bonds, yielding only C1 oxidation products. Catalysis by LPMOs requires the reduction of the active-site copper from Cu(II) to Cu(I) by a reducing agent and H(2)O(2) or O(2) as a cosubstrate. The chain is AA9 family lytic polysaccharide monooxygenase D from Phanerodontia chrysosporium (White-rot fungus).